Reading from the N-terminus, the 264-residue chain is Stage IV sporulation protein FA (264 aa).

Residues Met-1–Lys-10 are compositionally biased toward basic and acidic residues. The disordered stretch occupies residues Met-1–Pro-37. Residues Met-1–Ser-72 are Mother cell cytoplasmic-facing. Residues Leu-19–Ser-31 show a composition bias toward polar residues. The chain crosses the membrane as a helical span at residues Ile-73–Ala-90. At Tyr-91–Glu-264 the chain is on the forespore intermembrane space side.

In terms of assembly, forms a complex with BofA and SpoIVFB localized in the mother-cell membrane surrounding the forespore. Post-translationally, may be degraded by FtsH. It is stabilized by an ftsH disruption mutant, and in a probably independent fashion, by overexpression of BofA.

The protein localises to the forespore outer membrane. Its function is as follows. Implicated in the coupling of mother cell to forespore gene expression. Required for spore formation at 37 degrees Celsius, but not at 30 degrees Celsius. SpoIVFA plays a central role in both maintaining the SpoIVFA/BofA/SpoIVFB complex and anchoring it to the outer forespore membrane. SpoIVFA brings BofA into close proximity to SpoIVFB, allowing BofA to inhibit SpoIVFB. Increased accumulation of SpoIVFA seems to inhibit the activity of SpoIVFB and thus regulates the activation of sigma-K. In Bacillus subtilis (strain 168), this protein is Stage IV sporulation protein FA (spoIVFA).